The following is a 478-amino-acid chain: Lysine histidine transporter-like 7 (478 aa).

Residues 1 to 63 (MSIALGNLFD…ITESRKGNVY (63 aa)) are Cytoplasmic-facing. The interval 15–45 (ESGGSPLFMSPAPSTDPQPISGEKNGGDGGR) is disordered. A helical membrane pass occupies residues 64-86 (TATFHLLCSGIGLQVILLPAAFA). Over 87–89 (ALG) the chain is Extracellular. A helical membrane pass occupies residues 90 to 112 (WVWGTIILTVGFVWKLYTTWLLV). Over 113-140 (QLHEAVPGIRISRYVRLAIASFGVKLGK) the chain is Cytoplasmic. Residues 141–161 (LLGIFPVMYLSGGACTILVIT) traverse the membrane as a helical segment. The Extracellular portion of the chain corresponds to 162–177 (GGKSIQQLLQIMSDDN). A helical transmembrane segment spans residues 178–198 (TAPLTSVQCFLVFSCIAMIMS). Residues 199–205 (QFPNLNS) lie on the Cytoplasmic side of the membrane. The chain crosses the membrane as a helical span at residues 206 to 226 (LFGVSLIGAFMGIAYCTVIWI). Over 227 to 241 (LPVASDSQRTQVSVS) the chain is Extracellular. A helical transmembrane segment spans residues 242–262 (YATMDKSFVHIFNAIGLIALV). Residues 263–291 (YRGNNLVLEIQGTLPSDSKNPSCKTMWRA) lie on the Cytoplasmic side of the membrane. The chain crosses the membrane as a helical span at residues 292–312 (VMISHALVAICMFPLTFAVYW). Residues 313–340 (AYGDKIPATGGPVGNYLKLYTQEHSKRA) lie on the Extracellular side of the membrane. Residues 341–361 (ACFIHLTFIFSCLCSYPINLM) form a helical membrane-spanning segment. Residues 362–379 (PACDNIEMVYITKKKKPA) are Cytoplasmic-facing. A helical transmembrane segment spans residues 380 to 402 (SIIVRMMLRVFLSLVCFTIAVGF). Over 403–406 (PFLP) the chain is Extracellular. The chain crosses the membrane as a helical span at residues 407 to 429 (YLAVLIGAIALLVTFTYPCFMWI). Over 430-439 (SIKKPQRKSP) the chain is Cytoplasmic. The chain crosses the membrane as a helical span at residues 440 to 460 (MWLFNVLVGCLGASLSVLLLV). The Extracellular portion of the chain corresponds to 461 to 478 (ASAMRLAQKGLHANFFRP).

It belongs to the amino acid/polyamine transporter 2 family. Amino acid/auxin permease (AAAP) (TC 2.A.18.2) subfamily.

The protein resides in the cell membrane. Amino acid transporter. This is Lysine histidine transporter-like 7 from Arabidopsis thaliana (Mouse-ear cress).